Consider the following 251-residue polypeptide: Triosephosphate isomerase (251 aa).

Residue 9–11 (NWK) participates in substrate binding. The active-site Electrophile is histidine 94. The active-site Proton acceptor is the glutamate 166. Residues glycine 172, serine 211, and 232 to 233 (GG) contribute to the substrate site.

This sequence belongs to the triosephosphate isomerase family. As to quaternary structure, homodimer.

It is found in the cytoplasm. The enzyme catalyses D-glyceraldehyde 3-phosphate = dihydroxyacetone phosphate. The protein operates within carbohydrate biosynthesis; gluconeogenesis. Its pathway is carbohydrate degradation; glycolysis; D-glyceraldehyde 3-phosphate from glycerone phosphate: step 1/1. Its function is as follows. Involved in the gluconeogenesis. Catalyzes stereospecifically the conversion of dihydroxyacetone phosphate (DHAP) to D-glyceraldehyde-3-phosphate (G3P). The protein is Triosephosphate isomerase of Xanthomonas axonopodis pv. citri (strain 306).